A 151-amino-acid polypeptide reads, in one-letter code: Methylated-DNA--protein-cysteine methyltransferase (151 aa).

Residue cysteine 119 is the Nucleophile; methyl group acceptor of the active site.

It belongs to the MGMT family.

The protein resides in the cytoplasm. The catalysed reaction is a 6-O-methyl-2'-deoxyguanosine in DNA + L-cysteinyl-[protein] = S-methyl-L-cysteinyl-[protein] + a 2'-deoxyguanosine in DNA. The enzyme catalyses a 4-O-methyl-thymidine in DNA + L-cysteinyl-[protein] = a thymidine in DNA + S-methyl-L-cysteinyl-[protein]. Its function is as follows. Involved in the cellular defense against the biological effects of O6-methylguanine (O6-MeG) and O4-methylthymine (O4-MeT) in DNA. Repairs the methylated nucleobase in DNA by stoichiometrically transferring the methyl group to a cysteine residue in the enzyme. This is a suicide reaction: the enzyme is irreversibly inactivated. In Saccharolobus islandicus (strain Y.N.15.51 / Yellowstone #2) (Sulfolobus islandicus), this protein is Methylated-DNA--protein-cysteine methyltransferase.